A 260-amino-acid polypeptide reads, in one-letter code: Ribosomal RNA small subunit methyltransferase A (260 aa).

Positions 23, 48, 69, 94, and 110 each coordinate S-adenosyl-L-methionine.

It belongs to the class I-like SAM-binding methyltransferase superfamily. rRNA adenine N(6)-methyltransferase family. RsmA subfamily.

The protein resides in the cytoplasm. It catalyses the reaction adenosine(1518)/adenosine(1519) in 16S rRNA + 4 S-adenosyl-L-methionine = N(6)-dimethyladenosine(1518)/N(6)-dimethyladenosine(1519) in 16S rRNA + 4 S-adenosyl-L-homocysteine + 4 H(+). In terms of biological role, specifically dimethylates two adjacent adenosines (A1518 and A1519) in the loop of a conserved hairpin near the 3'-end of 16S rRNA in the 30S particle. May play a critical role in biogenesis of 30S subunits. This Thermotoga neapolitana (strain ATCC 49049 / DSM 4359 / NBRC 107923 / NS-E) protein is Ribosomal RNA small subunit methyltransferase A.